We begin with the raw amino-acid sequence, 177 residues long: Cytidylate kinase (177 aa).

7-15 (GSPGSGTTT) contacts ATP.

It belongs to the cytidylate kinase family. Type 2 subfamily.

The protein resides in the cytoplasm. It carries out the reaction CMP + ATP = CDP + ADP. The catalysed reaction is dCMP + ATP = dCDP + ADP. The polypeptide is Cytidylate kinase (Methanocorpusculum labreanum (strain ATCC 43576 / DSM 4855 / Z)).